Reading from the N-terminus, the 535-residue chain is MEVAAMEISTSLLLTTVALSVIVCYALVFSRAGKARAPLPLPPGPRGWPVLGNLPQLGGKTHQTLHEMTKVYGPLIRLRFGSSDVVVAGSAPVAAQFLRTHDANFSSRPRNSGGEHMAYNGRDVVFGPYGPRWRAMRKICAVNLFSARALDDLRAFREREAVLMVRSLAEASAAPGSSSPAAVVLGKEVNVCTTNALSRAAVGRRVFAAGAGEGAREFKEIVLEVMEVGGVLNVGDFVPALRWLDPQGVVARMKKLHRRFDDMMNAIIAERRAGSLLKPTDSREEGKDLLGLLLAMVQEQEWLAAGEDDRITDTEIKALILNLFVAGTDTTSTIVEWTMAELIRHPDILKHAQEELDVVVGRDRLLSESDLSHLTFFHAIIKETFRLHPSTPLSLPRMASEECEIAGYRIPKGAELLVNVWGIARDPAIWPDPLEYKPSRFLPGGTHTDVDVKGNDFGLIPFGAGRRICAGLSWGLRMVTMTAATLVHAFDWQLPADQTPDKLNMDEAFTLLLQRAEPLVVHPVPRLLPSAYNIA.

A helical transmembrane segment spans residues 8-28 (ISTSLLLTTVALSVIVCYALV). Cys-469 serves as a coordination point for heme.

It belongs to the cytochrome P450 family. Requires heme as cofactor.

It is found in the membrane. It carries out the reaction a 3'-unsubstituted flavone + reduced [NADPH--hemoprotein reductase] + O2 = a 3'-hydroxyflavone + oxidized [NADPH--hemoprotein reductase] + H2O + H(+). The protein operates within secondary metabolite biosynthesis; flavonoid biosynthesis. Catalyzes the 3'-hydroxylation of the flavonoid B-ring to the 3',4'-hydroxylated state. Catalyzes in vitro 3'-hydroxylation of different flavonoids. Catalyzes the conversion of apigenin to luteolin, naringenin to eriodictyol, and kaempferol to quercetin. Possesses specific 5'-hydroxylase activity toward chrysoeriol (a 3'-methoxylated flavone) and is indispensable for tricin formation. Converts chrysoeriol to selgin, a precursor of tricin, suggesting that chrysoeriol, instead of tricetin, is an intermediate in tricin biosynthesis. The chain is Flavonoid 3'-monooxygenase CYP75B4 from Oryza sativa subsp. japonica (Rice).